A 185-amino-acid polypeptide reads, in one-letter code: Ribosome-recycling factor (185 aa).

This sequence belongs to the RRF family.

The protein resides in the cytoplasm. In terms of biological role, responsible for the release of ribosomes from messenger RNA at the termination of protein biosynthesis. May increase the efficiency of translation by recycling ribosomes from one round of translation to another. The sequence is that of Ribosome-recycling factor from Methylococcus capsulatus (strain ATCC 33009 / NCIMB 11132 / Bath).